The following is a 616-amino-acid chain: Chaperone protein HscA (616 aa).

Belongs to the heat shock protein 70 family.

Chaperone involved in the maturation of iron-sulfur cluster-containing proteins. Has a low intrinsic ATPase activity which is markedly stimulated by HscB. Involved in the maturation of IscU. In Salmonella paratyphi A (strain ATCC 9150 / SARB42), this protein is Chaperone protein HscA.